Consider the following 396-residue polypeptide: Probable intron-encoded endonuclease aI3 (396 aa).

The segment at 51-90 is disordered; the sequence is TNNTNNNNPADSSSYESRMRAAGNSNSNSNSNSDSNINNT. A compositionally biased stretch (low complexity) spans 74–90; it reads NSNSNSNSNSDSNINNT.

The protein belongs to the LAGLIDADG endonuclease family.

It is found in the mitochondrion. Functionally, mitochondrial DNA endonuclease involved in intron homing. The polypeptide is Probable intron-encoded endonuclease aI3 (aI3) (Kluyveromyces lactis (strain ATCC 8585 / CBS 2359 / DSM 70799 / NBRC 1267 / NRRL Y-1140 / WM37) (Yeast)).